Here is a 365-residue protein sequence, read N- to C-terminus: DNA polymerase IV (365 aa).

Positions 14–198 constitute a UmuC domain; that stretch reads IIHIDMDAFF…LPIEKFHGVG (185 aa). Aspartate 18 and aspartate 116 together coordinate Mg(2+). Residue glutamate 117 is part of the active site.

This sequence belongs to the DNA polymerase type-Y family. In terms of assembly, monomer. It depends on Mg(2+) as a cofactor.

It is found in the cytoplasm. It catalyses the reaction DNA(n) + a 2'-deoxyribonucleoside 5'-triphosphate = DNA(n+1) + diphosphate. Poorly processive, error-prone DNA polymerase involved in untargeted mutagenesis. Copies undamaged DNA at stalled replication forks, which arise in vivo from mismatched or misaligned primer ends. These misaligned primers can be extended by PolIV. Exhibits no 3'-5' exonuclease (proofreading) activity. May be involved in translesional synthesis, in conjunction with the beta clamp from PolIII. The chain is DNA polymerase IV from Streptococcus pyogenes serotype M3 (strain ATCC BAA-595 / MGAS315).